The following is a 310-amino-acid chain: Proline-rich 28 kDa antigen (310 aa).

A signal peptide spans 1-32; it reads MIQIARTWRVFAGGMATGFIGVVLVTAGKASA. A disordered region spans residues 278–310; sequence QAPAPAPGSAPVGLPGQAPGYPPAGTLTPVPPR.

It to M.leprae ML0031.

The polypeptide is Proline-rich 28 kDa antigen (mtc28) (Mycobacterium bovis (strain ATCC BAA-935 / AF2122/97)).